Here is a 269-residue protein sequence, read N- to C-terminus: Proline-rich protein 7 (269 aa).

Topologically, residues 1-9 (MVMSQGTYT) are extracellular. Positions 1 to 44 (MVMSQGTYTFLTCFAGFWLIWGLIVLLCCFCSFLRRRLKRRQEE) are required for interaction with NMDA receptors. Residues 2–39 (VMSQGTYTFLTCFAGFWLIWGLIVLLCCFCSFLRRRLK) form a required for membrane localization region. A helical; Signal-anchor for type III membrane protein transmembrane segment spans residues 10–30 (FLTCFAGFWLIWGLIVLLCCF). Residues 31 to 269 (CSFLRRRLKR…IPLFGRTTAV (239 aa)) lie on the Cytoplasmic side of the membrane. Disordered regions lie at residues 63-83 (GSLA…RSRL) and 97-121 (PLLH…PHPP). Ser-64 is modified (phosphoserine). Residues 108–117 (AHPHPHHHAL) are compositionally biased toward basic residues. The required for internalization stretch occupies residues 146 to 166 (PCYEEAVLMAEPPPPYSEVLT). The required for apoptosis induction stretch occupies residues 146-269 (PCYEEAVLMA…IPLFGRTTAV (124 aa)). The short motif at 267-269 (TAV) is the PDZ-binding element.

As to quaternary structure, forms a complex with NMDA receptor zeta subunit GRIN1 and epsilon subunit GRIN2B. Interacts with GRIN2B. Interacts with GRIN1; the interaction is reduced upon NMDA receptor activity. Found in a postsynaptic membrane complex with DLG4 and GRIN1. Interacts with DLG4 (via PDZ3 domain and to lesser degree via PDZ2 domain). Interacts with JUN. Found in a complex with JUN and FBXW7. Interacts with JUN and FBXW7; the interaction inhibits ubiquitination-mediated JUN degradation promoting its phosphorylation and transcriptional activity. Interacts with SRC. Post-translationally, palmitoylated. In terms of processing, tyrosine phosphorylated, possibly by SRC. Highly expressed in brain, moderately expressed in lymph nodes and T cells and low expression in thymus and spleen. Expressed in single positive progenitor thymocytes, particularly in CD8 single positive thymocytes.

Its subcellular location is the cell membrane. It is found in the postsynaptic cell membrane. It localises to the postsynaptic density membrane. The protein localises to the cytoplasm. The protein resides in the perinuclear region. Its subcellular location is the synapse. It is found in the cell projection. It localises to the dendrite. The protein localises to the nucleus. In terms of biological role, acts as a synapse-to-nucleus messenger to promote NMDA receptor-mediated excitotoxicity in neurons in a JUN-dependent manner. Inhibits ubiquitination-mediated degradation and promotes phosphorylation and transcriptional activity of transcription factor JUN. Might play a redundant role in the regulation of T cell receptor signaling. Might promote apoptosis in T cells. The protein is Proline-rich protein 7 (Prr7) of Mus musculus (Mouse).